The primary structure comprises 727 residues: Cadmium-transporting ATPase (727 aa).

Positions 12–75 (EMNVYRVQGF…AGAFENLKVS (64 aa)) constitute an HMA domain. Residues cysteine 23 and cysteine 26 each coordinate Cd(2+). 5 helical membrane passes run 106-126 (STLL…FVNG), 130-150 (LVTS…LFKV), 171-191 (IGAT…LFAI), 336-356 (IIMV…GGSW), and 364-384 (LAVL…ISIV). The active-site 4-aspartylphosphate intermediate is the aspartate 415. 2 helical membrane passes run 672–694 (LNII…LLVI) and 699–721 (TLWI…SLRL).

It belongs to the cation transport ATPase (P-type) (TC 3.A.3) family. Type IB subfamily.

The protein localises to the cell membrane. It carries out the reaction Cd(2+)(in) + ATP + H2O = Cd(2+)(out) + ADP + phosphate + H(+). Its activity is regulated as follows. Inhibited by the antibiotic bafilomycin A1. Partially inhibited by DCCD, nigericin and FCCP. Functionally, couples the hydrolysis of ATP with the export of cadmium. Involved in cadmium resistance. The protein is Cadmium-transporting ATPase of Staphylococcus aureus.